The sequence spans 471 residues: Light-independent protochlorophyllide reductase subunit N (471 aa).

Positions 22, 47, and 107 each coordinate [4Fe-4S] cluster.

This sequence belongs to the BchN/ChlN family. Protochlorophyllide reductase is composed of three subunits; ChlL, ChlN and ChlB. Forms a heterotetramer of two ChlB and two ChlN subunits. The cofactor is [4Fe-4S] cluster.

It localises to the plastid. Its subcellular location is the chloroplast. It carries out the reaction chlorophyllide a + oxidized 2[4Fe-4S]-[ferredoxin] + 2 ADP + 2 phosphate = protochlorophyllide a + reduced 2[4Fe-4S]-[ferredoxin] + 2 ATP + 2 H2O. Its pathway is porphyrin-containing compound metabolism; chlorophyll biosynthesis (light-independent). Its function is as follows. Component of the dark-operative protochlorophyllide reductase (DPOR) that uses Mg-ATP and reduced ferredoxin to reduce ring D of protochlorophyllide (Pchlide) to form chlorophyllide a (Chlide). This reaction is light-independent. The NB-protein (ChlN-ChlB) is the catalytic component of the complex. The protein is Light-independent protochlorophyllide reductase subunit N of Anthoceros angustus (Hornwort).